The chain runs to 457 residues: D-xylose transporter (457 aa).

10 helical membrane-spanning segments follow: residues 14–34, 46–66, 81–101, 104–124, 131–151, 164–184, 244–264, 281–301, 309–329, and 338–358; these read ALGG…ILFI, GWVV…IGPS, IIFF…TLII, IILG…LAEL, GTVS…AYIT, WMLG…LILP, LIIG…TVLY, LLAH…AVAI, KIVN…SIGM, and AAII…ATWG. Gln138 serves as a coordination point for beta-D-xylose. Residues 254–255 and Asn260 contribute to the beta-D-xylose site; that span reads QQ. Residues Trp362 and Asn385 each contribute to the beta-D-xylose site. 2 helical membrane passes run 380–400 and 402–422; these read FASV…PSLL and FFGT…SIWF.

It belongs to the major facilitator superfamily. Sugar transporter (TC 2.A.1.1) family.

Its subcellular location is the cell membrane. Its activity is regulated as follows. Transport is inhibited by 6-deoxy-D-glucose. Uptake of D-xylose across the boundary membrane with the concomitant transport of protons into the cell (symport system). Transport is driven by the proton motive force generated by either malolactic fermentation or by the metabolism of D-glucose. The protein is D-xylose transporter of Levilactobacillus brevis (Lactobacillus brevis).